The following is a 227-amino-acid chain: uncharacterized protein (227 aa).

2 helical membrane passes run 13–35 and 155–177; these read CVRA…FAFS and IFFR…MVFL. Residues 192–227 form a disordered region; sequence GDARPRPAGPQGTARSRTDEAQVSPGTPPECPVSVF. Residues 217-227 show a composition bias toward pro residues; sequence GTPPECPVSVF.

It localises to the cell membrane. This is an uncharacterized protein from Treponema pallidum (strain Nichols).